We begin with the raw amino-acid sequence, 282 residues long: Formamidopyrimidine-DNA glycosylase (282 aa).

Proline 2 functions as the Schiff-base intermediate with DNA in the catalytic mechanism. The active-site Proton donor is the glutamate 3. Lysine 61 functions as the Proton donor; for beta-elimination activity in the catalytic mechanism. DNA contacts are provided by histidine 93, arginine 112, and lysine 158. The FPG-type zinc-finger motif lies at 244-278; the sequence is DAYGREGEGCRRCGAVMHREKFMNRSSFYCPRCQP. The active-site Proton donor; for delta-elimination activity is the arginine 268.

It belongs to the FPG family. In terms of assembly, monomer. It depends on Zn(2+) as a cofactor.

It carries out the reaction Hydrolysis of DNA containing ring-opened 7-methylguanine residues, releasing 2,6-diamino-4-hydroxy-5-(N-methyl)formamidopyrimidine.. The catalysed reaction is 2'-deoxyribonucleotide-(2'-deoxyribose 5'-phosphate)-2'-deoxyribonucleotide-DNA = a 3'-end 2'-deoxyribonucleotide-(2,3-dehydro-2,3-deoxyribose 5'-phosphate)-DNA + a 5'-end 5'-phospho-2'-deoxyribonucleoside-DNA + H(+). In terms of biological role, involved in base excision repair of DNA damaged by oxidation or by mutagenic agents. Acts as a DNA glycosylase that recognizes and removes damaged bases. Has a preference for oxidized purines, such as 7,8-dihydro-8-oxoguanine (8-oxoG). Has AP (apurinic/apyrimidinic) lyase activity and introduces nicks in the DNA strand. Cleaves the DNA backbone by beta-delta elimination to generate a single-strand break at the site of the removed base with both 3'- and 5'-phosphates. This is Formamidopyrimidine-DNA glycosylase from Mycobacterium leprae (strain Br4923).